The primary structure comprises 257 residues: Protein YIPF5 (257 aa).

Topologically, residues 1 to 124 (MSGFDNLNSG…RASDGSIMNE (124 aa)) are cytoplasmic. Positions 75 to 106 (PPTPQTFYGDSFEEEPPLLEELGINFDHIWQK) are interaction with Sec23. A helical membrane pass occupies residues 125-145 (TDLAGPVVFCLAFGATLLLAG). Residue lysine 146 is a topological domain, lumenal. A helical transmembrane segment spans residues 147–167 (IQFGYVYGISAIGCLGMFCLL). Topologically, residues 168–173 (NLMSMT) are cytoplasmic. Residues 174–194 (GVSFGCVASVLGYCLLPMILL) form a helical membrane-spanning segment. Over 195 to 196 (SS) the chain is Lumenal. Residues 197–217 (FAVVFSLQGMVGILLTATIIG) traverse the membrane as a helical segment. At 218-236 (WCSFSASKIFISALAMDGQ) the chain is on the cytoplasmic side. A helical transmembrane segment spans residues 237-257 (QLLVAYPCALLYGVFALISVF).

This sequence belongs to the YIP1 family. In terms of assembly, interacts with the COPII coat components Sec23 (SEC23A and/or SEC23B) and Sec24 (SEC24A and/or SEC24B). Interacts with YIF1A. May interact with RAB1A. Interacts with YIPF3 and YIPF4.

It localises to the endoplasmic reticulum membrane. The protein resides in the golgi apparatus. The protein localises to the cis-Golgi network membrane. Its subcellular location is the cytoplasmic vesicle. It is found in the COPII-coated vesicle. Plays a role in transport between endoplasmic reticulum and Golgi. In pancreatic beta cells, required to transport proinsulin from endoplasmic reticulum into the Golgi. In Rattus norvegicus (Rat), this protein is Protein YIPF5.